The chain runs to 87 residues: Small ribosomal subunit protein bS18B (87 aa).

Belongs to the bacterial ribosomal protein bS18 family. In terms of assembly, part of the 30S ribosomal subunit. Forms a tight heterodimer with protein bS6.

Binds as a heterodimer with protein bS6 to the central domain of the 16S rRNA, where it helps stabilize the platform of the 30S subunit. The polypeptide is Small ribosomal subunit protein bS18B (Mycobacterium marinum (strain ATCC BAA-535 / M)).